A 205-amino-acid polypeptide reads, in one-letter code: Outer-membrane lipoprotein carrier protein (205 aa).

The N-terminal stretch at 1–19 is a signal peptide; sequence MKKIIICFIFVFSINISFA.

It belongs to the LolA family. Monomer.

It localises to the periplasm. In terms of biological role, participates in the translocation of lipoproteins from the inner membrane to the outer membrane. Only forms a complex with a lipoprotein if the residue after the N-terminal Cys is not an aspartate (The Asp acts as a targeting signal to indicate that the lipoprotein should stay in the inner membrane). This Francisella tularensis subsp. novicida (strain U112) protein is Outer-membrane lipoprotein carrier protein.